The following is a 333-amino-acid chain: T-cell surface glycoprotein CD1b-1 (333 aa).

A signal peptide spans 1–18 (MLLLPLLLLAVIVPGGDN). The Extracellular portion of the chain corresponds to 19-302 (EDVFQGPTSF…LYWGHPTSTG (284 aa)). Asn-38, Asn-75, Asn-146, and Asn-258 each carry an N-linked (GlcNAc...) asparagine glycan. 2 disulfides stabilise this stretch: Cys-120–Cys-184 and Cys-224–Cys-279. One can recognise an Ig-like domain in the interval 185 to 295 (PRYFLSVLDA…LGDQDIVLYW (111 aa)). Residues 303-323 (LIFVAIIVSSLILLICLALWF) traverse the membrane as a helical segment. The Cytoplasmic segment spans residues 324 to 333 (WRRWSYLTIL). Positions 329–332 (YLTI) match the Internalization signal motif.

Heterodimer with B2M (beta-2-microglobulin). Interacts with saposin C.

Its subcellular location is the cell membrane. The protein localises to the endosome membrane. It is found in the lysosome membrane. Antigen-presenting protein that binds self and non-self lipid and glycolipid antigens and presents them to T-cell receptors on natural killer T-cells. The sequence is that of T-cell surface glycoprotein CD1b-1 from Ovis aries (Sheep).